Consider the following 139-residue polypeptide: Large ribosomal subunit protein uL16 (139 aa).

The protein belongs to the universal ribosomal protein uL16 family. Part of the 50S ribosomal subunit.

Its function is as follows. Binds 23S rRNA and is also seen to make contacts with the A and possibly P site tRNAs. This chain is Large ribosomal subunit protein uL16, found in Crocosphaera subtropica (strain ATCC 51142 / BH68) (Cyanothece sp. (strain ATCC 51142)).